The chain runs to 203 residues: Dephospho-CoA kinase (203 aa).

Residues 6-203 (KVAITGGLSC…ELYQELKIYI (198 aa)) enclose the DPCK domain. 14 to 19 (SCGKSS) is a binding site for ATP.

Belongs to the CoaE family.

It is found in the cytoplasm. It catalyses the reaction 3'-dephospho-CoA + ATP = ADP + CoA + H(+). Its pathway is cofactor biosynthesis; coenzyme A biosynthesis; CoA from (R)-pantothenate: step 5/5. Functionally, catalyzes the phosphorylation of the 3'-hydroxyl group of dephosphocoenzyme A to form coenzyme A. The polypeptide is Dephospho-CoA kinase (Protochlamydia amoebophila (strain UWE25)).